A 408-amino-acid chain; its full sequence is 1-deoxy-D-xylulose 5-phosphate reductoisomerase (408 aa).

NADPH-binding residues include threonine 19, glycine 20, serine 21, isoleucine 22, glycine 45, asparagine 47, and asparagine 130. Lysine 131 serves as a coordination point for 1-deoxy-D-xylulose 5-phosphate. Glutamate 132 contributes to the NADPH binding site. Aspartate 156 serves as a coordination point for Mn(2+). The 1-deoxy-D-xylulose 5-phosphate site is built by serine 157, glutamate 158, serine 182, and histidine 205. Glutamate 158 is a binding site for Mn(2+). Residue glycine 211 participates in NADPH binding. Residues serine 218, asparagine 223, lysine 224, and glutamate 227 each contribute to the 1-deoxy-D-xylulose 5-phosphate site. Position 227 (glutamate 227) interacts with Mn(2+).

This sequence belongs to the DXR family. Mg(2+) serves as cofactor. Requires Mn(2+) as cofactor.

It carries out the reaction 2-C-methyl-D-erythritol 4-phosphate + NADP(+) = 1-deoxy-D-xylulose 5-phosphate + NADPH + H(+). Its pathway is isoprenoid biosynthesis; isopentenyl diphosphate biosynthesis via DXP pathway; isopentenyl diphosphate from 1-deoxy-D-xylulose 5-phosphate: step 1/6. Functionally, catalyzes the NADPH-dependent rearrangement and reduction of 1-deoxy-D-xylulose-5-phosphate (DXP) to 2-C-methyl-D-erythritol 4-phosphate (MEP). The protein is 1-deoxy-D-xylulose 5-phosphate reductoisomerase of Gluconobacter oxydans (strain 621H) (Gluconobacter suboxydans).